A 169-amino-acid chain; its full sequence is MERAIFAGGCFWCMVQPFEEQAGILSVRSGYTGGHLPNPSYEQVCAKTTGHTEAVEIIFDPKQIAYKDLVELYWAQTDPTDAFGQFEDRGDNYRPVIYYTTERQKEIAEQSKASLQASGRFDQPIVTTIEPAEPFYLAEDYHQGFYKKNPKRYAQSSAIRHQFLEENWS.

Cys10 is a catalytic residue.

This sequence belongs to the MsrA Met sulfoxide reductase family.

The enzyme catalyses L-methionyl-[protein] + [thioredoxin]-disulfide + H2O = L-methionyl-(S)-S-oxide-[protein] + [thioredoxin]-dithiol. It catalyses the reaction [thioredoxin]-disulfide + L-methionine + H2O = L-methionine (S)-S-oxide + [thioredoxin]-dithiol. Its function is as follows. Has an important function as a repair enzyme for proteins that have been inactivated by oxidation. Catalyzes the reversible oxidation-reduction of methionine sulfoxide in proteins to methionine. This Streptococcus pyogenes serotype M2 (strain MGAS10270) protein is Peptide methionine sulfoxide reductase MsrA.